A 202-amino-acid chain; its full sequence is Cytochrome c oxidase assembly protein CtaG (202 aa).

Over 1–14 the chain is Cytoplasmic; sequence MTSPANPSEVTRDR. A helical; Signal-anchor for type II membrane protein membrane pass occupies residues 15-37; sequence RNRGVAFVCAGVFVAMVGMSFAA. Residues 38–202 lie on the Periplasmic side of the membrane; it reads VPLYRLFCQV…GAAKTQKLGG (165 aa).

This sequence belongs to the COX11/CtaG family.

The protein localises to the cell inner membrane. In terms of biological role, exerts its effect at some terminal stage of cytochrome c oxidase synthesis, probably by being involved in the insertion of the copper B into subunit I. In Chelativorans sp. (strain BNC1), this protein is Cytochrome c oxidase assembly protein CtaG.